We begin with the raw amino-acid sequence, 292 residues long: Acetyl-coenzyme A carboxylase carboxyl transferase subunit beta (292 aa).

In terms of domain architecture, CoA carboxyltransferase N-terminal spans 29 to 292 (LWVKCSECGQ…HGVKDLMGAN (264 aa)). Positions 33, 36, 52, and 55 each coordinate Zn(2+). Residues 33-55 (CSECGQVAYRKDLISNFNVCSNC) form a C4-type zinc finger.

Belongs to the AccD/PCCB family. As to quaternary structure, acetyl-CoA carboxylase is a heterohexamer composed of biotin carboxyl carrier protein (AccB), biotin carboxylase (AccC) and two subunits each of ACCase subunit alpha (AccA) and ACCase subunit beta (AccD). Zn(2+) is required as a cofactor.

The protein resides in the cytoplasm. The catalysed reaction is N(6)-carboxybiotinyl-L-lysyl-[protein] + acetyl-CoA = N(6)-biotinyl-L-lysyl-[protein] + malonyl-CoA. It participates in lipid metabolism; malonyl-CoA biosynthesis; malonyl-CoA from acetyl-CoA: step 1/1. Functionally, component of the acetyl coenzyme A carboxylase (ACC) complex. Biotin carboxylase (BC) catalyzes the carboxylation of biotin on its carrier protein (BCCP) and then the CO(2) group is transferred by the transcarboxylase to acetyl-CoA to form malonyl-CoA. The sequence is that of Acetyl-coenzyme A carboxylase carboxyl transferase subunit beta from Prochlorococcus marinus (strain MIT 9515).